Here is a 339-residue protein sequence, read N- to C-terminus: WAT1-related protein At5g40210 (339 aa).

10 helical membrane-spanning segments follow: residues 11 to 31, 42 to 62, 74 to 94, 104 to 124, 140 to 160, 168 to 188, 200 to 220, 233 to 253, 266 to 286, and 289 to 309; these read GWILTAMVVTEFSNVGVNTLV, FVVLVYSYTFGSLLLLPLTFF, FSILCNMGILGLIASAFQILG, TLSSAMSNVNPAFTFILAVVF, VLGTILSIIGALVVTLYHGPM, WIIGGGLLALQYILVSVSYLV, VVVTLVHNVCIAVVCAFVSLL, FDITLITVVATGILNSGYYVI, LSMFKPLSILIAAVSTFIFLG, and LYLGSVMGGILISIGFYMVLW. The 126-residue stretch at 29–154 folds into the EamA domain; the sequence is TLVKAATSKG…LSIIGALVVT (126 aa).

This sequence belongs to the drug/metabolite transporter (DMT) superfamily. Plant drug/metabolite exporter (P-DME) (TC 2.A.7.4) family.

The protein resides in the membrane. In Arabidopsis thaliana (Mouse-ear cress), this protein is WAT1-related protein At5g40210.